The following is a 228-amino-acid chain: UPF0758 protein SAB1521c (228 aa).

An MPN domain is found at 102-224; the sequence is KITQPSDVAD…FTSLVEAGYF (123 aa). Positions 173, 175, and 186 each coordinate Zn(2+). The JAMM motif motif lies at 173–186; that stretch reads HNHPSGDVTPSQED.

This sequence belongs to the UPF0758 family.

This is UPF0758 protein SAB1521c from Staphylococcus aureus (strain bovine RF122 / ET3-1).